A 128-amino-acid chain; its full sequence is Aspartate 1-decarboxylase (128 aa).

Serine 25 (schiff-base intermediate with substrate; via pyruvic acid) is an active-site residue. Serine 25 is modified (pyruvic acid (Ser)). Threonine 57 contacts substrate. Catalysis depends on tyrosine 58, which acts as the Proton donor. Residue glycine 73–alanine 75 coordinates substrate.

The protein belongs to the PanD family. Heterooctamer of four alpha and four beta subunits. Pyruvate serves as cofactor. Post-translationally, is synthesized initially as an inactive proenzyme, which is activated by self-cleavage at a specific serine bond to produce a beta-subunit with a hydroxyl group at its C-terminus and an alpha-subunit with a pyruvoyl group at its N-terminus.

It is found in the cytoplasm. It carries out the reaction L-aspartate + H(+) = beta-alanine + CO2. The protein operates within cofactor biosynthesis; (R)-pantothenate biosynthesis; beta-alanine from L-aspartate: step 1/1. In terms of biological role, catalyzes the pyruvoyl-dependent decarboxylation of aspartate to produce beta-alanine. In Burkholderia cenocepacia (strain HI2424), this protein is Aspartate 1-decarboxylase.